Reading from the N-terminus, the 1377-residue chain is DNA-directed RNA polymerase subunit beta'' (1377 aa).

Zn(2+)-binding residues include C220, C291, C298, and C301.

This sequence belongs to the RNA polymerase beta' chain family. RpoC2 subfamily. In plastids the minimal PEP RNA polymerase catalytic core is composed of four subunits: alpha, beta, beta', and beta''. When a (nuclear-encoded) sigma factor is associated with the core the holoenzyme is formed, which can initiate transcription. Zn(2+) serves as cofactor.

Its subcellular location is the plastid. It localises to the chloroplast. The enzyme catalyses RNA(n) + a ribonucleoside 5'-triphosphate = RNA(n+1) + diphosphate. DNA-dependent RNA polymerase catalyzes the transcription of DNA into RNA using the four ribonucleoside triphosphates as substrates. The polypeptide is DNA-directed RNA polymerase subunit beta'' (Nandina domestica (Heavenly bamboo)).